Reading from the N-terminus, the 212-residue chain is Phosphatidylserine decarboxylase proenzyme (212 aa).

Residue S182 is the Schiff-base intermediate with substrate; via pyruvic acid of the active site. The residue at position 182 (S182) is a Pyruvic acid (Ser); by autocatalysis.

Belongs to the phosphatidylserine decarboxylase family. PSD-A subfamily. As to quaternary structure, heterodimer of a large membrane-associated beta subunit and a small pyruvoyl-containing alpha subunit. It depends on pyruvate as a cofactor. Post-translationally, is synthesized initially as an inactive proenzyme. Formation of the active enzyme involves a self-maturation process in which the active site pyruvoyl group is generated from an internal serine residue via an autocatalytic post-translational modification. Two non-identical subunits are generated from the proenzyme in this reaction, and the pyruvate is formed at the N-terminus of the alpha chain, which is derived from the carboxyl end of the proenzyme. The post-translation cleavage follows an unusual pathway, termed non-hydrolytic serinolysis, in which the side chain hydroxyl group of the serine supplies its oxygen atom to form the C-terminus of the beta chain, while the remainder of the serine residue undergoes an oxidative deamination to produce ammonia and the pyruvoyl prosthetic group on the alpha chain.

Its subcellular location is the cell membrane. The catalysed reaction is a 1,2-diacyl-sn-glycero-3-phospho-L-serine + H(+) = a 1,2-diacyl-sn-glycero-3-phosphoethanolamine + CO2. It participates in phospholipid metabolism; phosphatidylethanolamine biosynthesis; phosphatidylethanolamine from CDP-diacylglycerol: step 2/2. Functionally, catalyzes the formation of phosphatidylethanolamine (PtdEtn) from phosphatidylserine (PtdSer). The polypeptide is Phosphatidylserine decarboxylase proenzyme (Chlorobium phaeobacteroides (strain DSM 266 / SMG 266 / 2430)).